A 420-amino-acid chain; its full sequence is Carbohydrate sulfotransferase 12 (420 aa).

The Cytoplasmic segment spans residues 1–5 (MAKSR). The chain crosses the membrane as a helical; Signal-anchor for type II membrane protein span at residues 6-26 (LFCLLVALGSVFMILFIIVYW). Residues 27–420 (DNVGTANLNL…YPKPDDLLSV (394 aa)) are Lumenal-facing. N-linked (GlcNAc...) asparagine glycans are attached at residues N76 and N139. A 3'-phosphoadenylyl sulfate-binding site is contributed by 176–182 (PKVACTN). N-linked (GlcNAc...) asparagine glycosylation occurs at N215. Residue 251–259 (RDPFVRLIS) participates in 3'-phosphoadenylyl sulfate binding. N-linked (GlcNAc...) asparagine glycosylation is found at N286 and N376.

It belongs to the sulfotransferase 2 family.

Its subcellular location is the golgi apparatus membrane. It carries out the reaction chondroitin beta-D-glucuronate + n 3'-phosphoadenylyl sulfate = chondroitin 4'-sulfate + n adenosine 3',5'-bisphosphate + n H(+). Its function is as follows. Catalyzes the transfer of sulfate to position 4 of the N-acetylgalactosamine (GalNAc) residue of chondroitin and desulfated dermatan sulfate. Chondroitin sulfate constitutes the predominant proteoglycan present in cartilage and is distributed on the surfaces of many cells and extracellular matrices. The sequence is that of Carbohydrate sulfotransferase 12 (chst12) from Xenopus laevis (African clawed frog).